We begin with the raw amino-acid sequence, 235 residues long: UPF0758 protein COPRO5265_1522 (235 aa).

One can recognise an MPN domain in the interval 109–235; it reads RITTPEDAIE…HVSLAREKLI (127 aa). Histidine 184, histidine 186, and aspartate 197 together coordinate Zn(2+). A JAMM motif motif is present at residues 184-197; the sequence is HNHPSGDPSPSRED.

It belongs to the UPF0758 family.

This chain is UPF0758 protein COPRO5265_1522, found in Coprothermobacter proteolyticus (strain ATCC 35245 / DSM 5265 / OCM 4 / BT).